The chain runs to 644 residues: DNA gyrase subunit B (644 aa).

The Toprim domain occupies 429 to 543 (CEIFLVEGDS…AGYVYIAQPP (115 aa)). Positions 435, 508, and 510 each coordinate Mg(2+).

It belongs to the type II topoisomerase GyrB family. In terms of assembly, heterotetramer, composed of two GyrA and two GyrB chains. In the heterotetramer, GyrA contains the active site tyrosine that forms a transient covalent intermediate with DNA, while GyrB binds cofactors and catalyzes ATP hydrolysis. Mg(2+) serves as cofactor. The cofactor is Mn(2+). Ca(2+) is required as a cofactor.

Its subcellular location is the cytoplasm. The enzyme catalyses ATP-dependent breakage, passage and rejoining of double-stranded DNA.. In terms of biological role, a type II topoisomerase that negatively supercoils closed circular double-stranded (ds) DNA in an ATP-dependent manner to modulate DNA topology and maintain chromosomes in an underwound state. Negative supercoiling favors strand separation, and DNA replication, transcription, recombination and repair, all of which involve strand separation. Also able to catalyze the interconversion of other topological isomers of dsDNA rings, including catenanes and knotted rings. Type II topoisomerases break and join 2 DNA strands simultaneously in an ATP-dependent manner. The sequence is that of DNA gyrase subunit B from Staphylococcus aureus (strain COL).